The primary structure comprises 2153 residues: RNA-directed RNA polymerase L (2153 aa).

Mn(2+) is bound by residues histidine 36, glutamate 54, aspartate 97, glutamate 110, and valine 111. The For endonuclease activity role is filled by lysine 124. The RdRp catalytic domain occupies 957 to 1143 (TGKKIRFKRK…AVNQEMWKSM (187 aa)). A Mg(2+)-binding site is contributed by aspartate 1100.

This sequence belongs to the Bunyavirales RNA polymerase family. Interacts with the viral nucleoprotein. Mn(2+) is required as a cofactor. It depends on Mg(2+) as a cofactor.

It localises to the host cytoplasm. It is found in the host perinuclear region. The enzyme catalyses RNA(n) + a ribonucleoside 5'-triphosphate = RNA(n+1) + diphosphate. Functionally, RNA-dependent RNA polymerase, which is responsible for the replication and transcription of the viral RNA genome using antigenomic RNA as an intermediate. During transcription, synthesizes subgenomic RNAs and assures their capping by a cap-snatching mechanism, which involves the endonuclease activity cleaving the host capped pre-mRNAs. These short capped RNAs are then used as primers for viral transcription. Cleaves ssRNA substrates but not DNA. Seems to downregulate the expression of its own and heterologous mRNAs through its endonuclease activity. This chain is RNA-directed RNA polymerase L, found in Black Creek Canal orthohantavirus (BCCV).